A 213-amino-acid polypeptide reads, in one-letter code: Orotate phosphoribosyltransferase (213 aa).

Lys-26 provides a ligand contact to 5-phospho-alpha-D-ribose 1-diphosphate. 34–35 (FF) provides a ligand contact to orotate. 5-phospho-alpha-D-ribose 1-diphosphate contacts are provided by residues 72–73 (YK), Arg-99, Lys-100, Lys-103, His-105, and 124–132 (DDVITAGTA). 2 residues coordinate orotate: Thr-128 and Arg-156.

Belongs to the purine/pyrimidine phosphoribosyltransferase family. PyrE subfamily. In terms of assembly, homodimer. The cofactor is Mg(2+).

The enzyme catalyses orotidine 5'-phosphate + diphosphate = orotate + 5-phospho-alpha-D-ribose 1-diphosphate. Its pathway is pyrimidine metabolism; UMP biosynthesis via de novo pathway; UMP from orotate: step 1/2. Functionally, catalyzes the transfer of a ribosyl phosphate group from 5-phosphoribose 1-diphosphate to orotate, leading to the formation of orotidine monophosphate (OMP). The polypeptide is Orotate phosphoribosyltransferase (Escherichia coli O139:H28 (strain E24377A / ETEC)).